Consider the following 430-residue polypeptide: Glutamate-1-semialdehyde 2,1-aminomutase (430 aa).

Lys266 bears the N6-(pyridoxal phosphate)lysine mark.

Belongs to the class-III pyridoxal-phosphate-dependent aminotransferase family. HemL subfamily. As to quaternary structure, homodimer. Pyridoxal 5'-phosphate is required as a cofactor.

Its subcellular location is the cytoplasm. It carries out the reaction (S)-4-amino-5-oxopentanoate = 5-aminolevulinate. Its pathway is porphyrin-containing compound metabolism; protoporphyrin-IX biosynthesis; 5-aminolevulinate from L-glutamyl-tRNA(Glu): step 2/2. The sequence is that of Glutamate-1-semialdehyde 2,1-aminomutase from Acidithiobacillus ferrooxidans (strain ATCC 23270 / DSM 14882 / CIP 104768 / NCIMB 8455) (Ferrobacillus ferrooxidans (strain ATCC 23270)).